The sequence spans 145 residues: MNGRVDYLVTEEEINLTRGPSGLGFNIVGGTDQQYVSNDSGIYVSRIKEDGAAAQDGRLQEGDKILSVNGQDLKNLLHQDAVDLFRNAGCAVSLRVQHRLPVQNGPIVHRGEGEPSGVPVAMVLLPVFALTMVAVWAFVRYRKQL.

Residues 1–117 (MNGRVDYLVT…VHRGEGEPSG (117 aa)) are Cytoplasmic-facing. A PDZ domain is found at 13–100 (EINLTRGPSG…AVSLRVQHRL (88 aa)). The chain crosses the membrane as a helical; Anchor for type IV membrane protein span at residues 118 to 138 (VPVAMVLLPVFALTMVAVWAF). Over 139–145 (VRYRKQL) the chain is Mitochondrial intermembrane.

In terms of assembly, binds (via the PDZ domain) to isoform 2A of SYNJ2 (via the unique motif in the C-terminus). Interacts (via C-terminus) with RALBP1. Interacts (via PDZ domain) with ACVR2A (via C-terminus) and ACVR2B (via C-terminus). Forms a ternary complex with ACVR2A and RALBP1. Interacts with MAPK12. Interacts with DLL1; enhances DLL1 protein stability, and promotes notch signaling in endothelial cells. As to expression, isoform 1 and isoform 2 are widely expressed, notably in brain, heart, lung, liver, kidney, skeletal muscle, ovary and testis. Isoform 3 is detected only in heart, spleen and testis.

The protein localises to the mitochondrion outer membrane. It is found in the cytoplasm. Its subcellular location is the perinuclear region. Its function is as follows. Isoform 1 regulates endocytosis of activin type 2 receptor kinases through the Ral/RALBP1-dependent pathway and may be involved in suppression of activin-induced signal transduction. Isoform 2 and isoform 3 show a stimulatory affect on activin-induced signal transduction and enhance activin type 2 expression at the cell surface. The polypeptide is Synaptojanin-2-binding protein (Mus musculus (Mouse)).